The following is a 483-amino-acid chain: Aspartyl/glutamyl-tRNA(Asn/Gln) amidotransferase subunit B (483 aa).

This sequence belongs to the GatB/GatE family. GatB subfamily. As to quaternary structure, heterotrimer of A, B and C subunits.

It catalyses the reaction L-glutamyl-tRNA(Gln) + L-glutamine + ATP + H2O = L-glutaminyl-tRNA(Gln) + L-glutamate + ADP + phosphate + H(+). It carries out the reaction L-aspartyl-tRNA(Asn) + L-glutamine + ATP + H2O = L-asparaginyl-tRNA(Asn) + L-glutamate + ADP + phosphate + 2 H(+). Functionally, allows the formation of correctly charged Asn-tRNA(Asn) or Gln-tRNA(Gln) through the transamidation of misacylated Asp-tRNA(Asn) or Glu-tRNA(Gln) in organisms which lack either or both of asparaginyl-tRNA or glutaminyl-tRNA synthetases. The reaction takes place in the presence of glutamine and ATP through an activated phospho-Asp-tRNA(Asn) or phospho-Glu-tRNA(Gln). In Rickettsia rickettsii (strain Sheila Smith), this protein is Aspartyl/glutamyl-tRNA(Asn/Gln) amidotransferase subunit B.